Here is a 104-residue protein sequence, read N- to C-terminus: MKIHVRKNDTVIVISGKDKGKTGEVLKAYPKTGKVLVQGVNIVKKHQKANKGQVESAIIEKEAAINSSKVMLYCNKCKNATRISNKVLDDGTKVRVCKKCGETF.

Belongs to the universal ribosomal protein uL24 family. In terms of assembly, part of the 50S ribosomal subunit.

Functionally, one of two assembly initiator proteins, it binds directly to the 5'-end of the 23S rRNA, where it nucleates assembly of the 50S subunit. Its function is as follows. One of the proteins that surrounds the polypeptide exit tunnel on the outside of the subunit. This Clostridium beijerinckii (strain ATCC 51743 / NCIMB 8052) (Clostridium acetobutylicum) protein is Large ribosomal subunit protein uL24.